The sequence spans 248 residues: Methyl-coenzyme M reductase subunit gamma (248 aa).

Coenzyme M is bound at residue Arg121.

The protein belongs to the methyl-coenzyme M reductase gamma subunit family. MCR is a hexamer of two alpha, two beta, and two gamma chains, forming a dimer of heterotrimers. The cofactor is coenzyme F430.

The protein localises to the cytoplasm. The catalysed reaction is coenzyme B + methyl-coenzyme M = methane + coenzyme M-coenzyme B heterodisulfide. It participates in one-carbon metabolism; methyl-coenzyme M reduction; methane from methyl-coenzyme M: step 1/1. Functionally, component of the methyl-coenzyme M reductase (MCR) I that catalyzes the reductive cleavage of methyl-coenzyme M (CoM-S-CH3 or 2-(methylthio)ethanesulfonate) using coenzyme B (CoB or 7-mercaptoheptanoylthreonine phosphate) as reductant which results in the production of methane and the mixed heterodisulfide of CoB and CoM (CoM-S-S-CoB). This is the final step in methanogenesis. This is Methyl-coenzyme M reductase subunit gamma (mcrG) from Methanosarcina barkeri (strain Fusaro / DSM 804).